A 688-amino-acid polypeptide reads, in one-letter code: MSSALPPFRPSLVSDPLSARQDPSLPGILPVSAPILIEDIGPRVSDGRYPIKRVLGEGVVVSAAVFRDGHVPLAAALLWRRSPRPGEPAGGRGAWHEVPLTQIEPGLARWRARFDPPAIGRFDYLIEAWSDDWAGWRHDTLIKRDAGLDLSLEVLEGMALIEATIARIDGTDQAADQGLLSSWLADAQGLETAGGRATLMLSETLDAVMARHPDRSGAVRSGPPLSVVVDPPRAGFAAWYEMAPRSQASEPGRWGTFADCAARLPDIRAMGFDTLYLMPIHPIGRIHRKGPNNSLKAGPDDPGSPYAIGAAEGGHTAIHPELGTLDEFRALVAQAGEMGMDVALDIAIQCAPDHPWVSEHPEWFEFRPDGTIKYAENPPKKYQDIVNLAFWGPHRQELWLALLEVFTFWAEQGVRVFRVDNPHTKPVPFWEWLIATVKARYPDCIFLAEAFTRPPMMKMLAKIGFTQSYSYFTWRTTKAELTSYMEELVEDDPADYMRVNFFANTPDILPFHLQTGGRPAFMQRLVLAATLSSVYGIHNGFELCENAAIPGKEEYADSEKYDFKPRDWNAEGNIKDLIAKVNWIRNENPALQAFRTLRFFRADNDQILFYGKMTGDRANIILVAVNLDPHAGQGGLLWLPLAEMGLSDGQPFIVEELLSGTRLEWTGSPHHYWFDPATNPAAIFRITP.

Alpha-maltose 1-phosphate contacts are provided by Lys-289, Gln-349, and Asp-384. Asp-420 acts as the Nucleophile in catalysis. Residue Asn-421 coordinates alpha-maltose 1-phosphate. Glu-449 (proton donor) is an active-site residue. 560-561 is an alpha-maltose 1-phosphate binding site; it reads KY.

The protein belongs to the glycosyl hydrolase 13 family. GlgE subfamily. In terms of assembly, homodimer.

It carries out the reaction alpha-maltose 1-phosphate + [(1-&gt;4)-alpha-D-glucosyl](n) = [(1-&gt;4)-alpha-D-glucosyl](n+2) + phosphate. Functionally, maltosyltransferase that uses maltose 1-phosphate (M1P) as the sugar donor to elongate linear or branched alpha-(1-&gt;4)-glucans. Is involved in a branched alpha-glucan biosynthetic pathway from trehalose, together with TreS, Mak and GlgB. This is Alpha-1,4-glucan:maltose-1-phosphate maltosyltransferase from Rhodospirillum rubrum (strain ATCC 11170 / ATH 1.1.1 / DSM 467 / LMG 4362 / NCIMB 8255 / S1).